The following is an 88-amino-acid chain: Small ribosomal subunit protein uS15 (88 aa).

This sequence belongs to the universal ribosomal protein uS15 family. Part of the 30S ribosomal subunit. Forms a bridge to the 50S subunit in the 70S ribosome, contacting the 23S rRNA.

Functionally, one of the primary rRNA binding proteins, it binds directly to 16S rRNA where it helps nucleate assembly of the platform of the 30S subunit by binding and bridging several RNA helices of the 16S rRNA. Its function is as follows. Forms an intersubunit bridge (bridge B4) with the 23S rRNA of the 50S subunit in the ribosome. In Finegoldia magna (strain ATCC 29328 / DSM 20472 / WAL 2508) (Peptostreptococcus magnus), this protein is Small ribosomal subunit protein uS15.